We begin with the raw amino-acid sequence, 65 residues long: Conotoxin TsMRCL-04 (65 aa).

An N-terminal signal peptide occupies residues 1 to 20 (MRCLPVFIILLLLIPSAASA). The propeptide occupies 21 to 48 (AQPETKDDAALASFYDNAKRTLQRHWAK). The residue at position 63 (glutamate 63) is a Glutamic acid 1-amide.

It belongs to the conotoxin T superfamily. Post-translationally, contains 2 disulfide bonds that can be either 'C1-C3, C2-C4' or 'C1-C4, C2-C3', since these disulfide connectivities have been observed for conotoxins with cysteine framework V (for examples, see AC P0DQQ7 and AC P81755). In terms of tissue distribution, expressed by the venom duct.

Its subcellular location is the secreted. The polypeptide is Conotoxin TsMRCL-04 (Conus tessulatus (Tessellate cone)).